The chain runs to 219 residues: Probable GTP-binding protein EngB (219 aa).

Residues 24–207 (VQPEIAFAGR…HALIESWLRP (184 aa)) form the EngB-type G domain. GTP is bound by residues 32–39 (GRSNAGKS), 59–63 (GRTQH), 81–84 (DLPG), 148–151 (TKCD), and 185–188 (LFSA). 2 residues coordinate Mg(2+): serine 39 and threonine 61.

The protein belongs to the TRAFAC class TrmE-Era-EngA-EngB-Septin-like GTPase superfamily. EngB GTPase family. Mg(2+) is required as a cofactor.

Functionally, necessary for normal cell division and for the maintenance of normal septation. The protein is Probable GTP-binding protein EngB of Burkholderia thailandensis (strain ATCC 700388 / DSM 13276 / CCUG 48851 / CIP 106301 / E264).